The following is a 64-amino-acid chain: DNA gyrase inhibitor YacG (64 aa).

The Zn(2+) site is built by Cys-7, Cys-10, Cys-26, and Cys-30. Residues 44-64 (SIPGEPVVIANDDYNNEESDY) form a disordered region.

It belongs to the DNA gyrase inhibitor YacG family. As to quaternary structure, interacts with GyrB. It depends on Zn(2+) as a cofactor.

Inhibits all the catalytic activities of DNA gyrase by preventing its interaction with DNA. Acts by binding directly to the C-terminal domain of GyrB, which probably disrupts DNA binding by the gyrase. The polypeptide is DNA gyrase inhibitor YacG (Idiomarina loihiensis (strain ATCC BAA-735 / DSM 15497 / L2-TR)).